A 251-amino-acid chain; its full sequence is CDP-diacylglycerol pyrophosphatase (251 aa).

A helical membrane pass occupies residues 4–24 (AGLLFLVMIVIAVVAAGIGYW).

This sequence belongs to the Cdh family.

Its subcellular location is the cell inner membrane. The enzyme catalyses a CDP-1,2-diacyl-sn-glycerol + H2O = a 1,2-diacyl-sn-glycero-3-phosphate + CMP + 2 H(+). The protein operates within phospholipid metabolism; CDP-diacylglycerol degradation; phosphatidate from CDP-diacylglycerol: step 1/1. The polypeptide is CDP-diacylglycerol pyrophosphatase (Escherichia coli O7:K1 (strain IAI39 / ExPEC)).